The primary structure comprises 301 residues: Protoheme IX farnesyltransferase (301 aa).

9 helical membrane-spanning segments follow: residues 29 to 49 (VVAL…PGVV), 51 to 71 (IVPL…AAAF), 96 to 118 (VSIA…VLYV), 123 to 143 (LTAW…TAYL), 151 to 171 (IVVG…AVTG), 177 to 197 (ALLL…ALAI), 223 to 243 (CIFL…LVGM), 244 to 264 (CGPV…YKAW), and 281 to 301 (FSIY…YLWL).

Belongs to the UbiA prenyltransferase family. Protoheme IX farnesyltransferase subfamily.

It localises to the cell inner membrane. It catalyses the reaction heme b + (2E,6E)-farnesyl diphosphate + H2O = Fe(II)-heme o + diphosphate. The protein operates within porphyrin-containing compound metabolism; heme O biosynthesis; heme O from protoheme: step 1/1. Its function is as follows. Converts heme B (protoheme IX) to heme O by substitution of the vinyl group on carbon 2 of heme B porphyrin ring with a hydroxyethyl farnesyl side group. The chain is Protoheme IX farnesyltransferase from Shewanella halifaxensis (strain HAW-EB4).